The chain runs to 455 residues: MPNIDTATMTPREIVQELDRHIVGQHDAKRAVAIALRNRWRRMQLPEELRNEVMPKNILMIGPTGVGKTEIARRLATLANAPFVKVEATRFTEVGYVGKDVEQIIRDLADTAVKLYREQAKVRVRNQAEERAEDRILDALLPRRATGIGFDPEAARNEPSSQDNDTRIKFRRMLRNGELDEREIELEVAVNASMDIMTPPGMEEMGQQLRQMFSNLGSGKSQKRKLTIKAARPLLIEEEAGKLVNEDDVRTAAIEACEQHGIVFIDEIDKVAKRGEAGSSGGDVSREGVQRDLLPLVEGSNVSTKYGTVKTDHILFIASGAFHLAKPSDLIPELQGRFPIRVELTALTKADFVRILTEPKAALIKQYEALLQTEGVALTFASDAVDRLAEIAAQVNERQENIGARRLHTVLERLLDVLSYEAPDRDGQSVTVDAAYVDAQLGELVQDPDLSRYIL.

Residues Val-23, 65–70, Asp-266, Glu-333, and Arg-405 each bind ATP; that span reads GVGKTE.

It belongs to the ClpX chaperone family. HslU subfamily. A double ring-shaped homohexamer of HslV is capped on each side by a ring-shaped HslU homohexamer. The assembly of the HslU/HslV complex is dependent on binding of ATP.

The protein localises to the cytoplasm. In terms of biological role, ATPase subunit of a proteasome-like degradation complex; this subunit has chaperone activity. The binding of ATP and its subsequent hydrolysis by HslU are essential for unfolding of protein substrates subsequently hydrolyzed by HslV. HslU recognizes the N-terminal part of its protein substrates and unfolds these before they are guided to HslV for hydrolysis. This is ATP-dependent protease ATPase subunit HslU from Xanthomonas axonopodis pv. citri (strain 306).